The chain runs to 55 residues: Large ribosomal subunit protein bL33 (55 aa).

A compositionally biased stretch (basic and acidic residues) spans 1–11; that stretch reads MAKGGREKIKL. Positions 1-29 are disordered; that stretch reads MAKGGREKIKLESSAGTGHFYTTSKNKRT. Residues 14–24 show a composition bias toward polar residues; that stretch reads SAGTGHFYTTS.

The protein belongs to the bacterial ribosomal protein bL33 family.

In Polynucleobacter asymbioticus (strain DSM 18221 / CIP 109841 / QLW-P1DMWA-1) (Polynucleobacter necessarius subsp. asymbioticus), this protein is Large ribosomal subunit protein bL33.